A 253-amino-acid polypeptide reads, in one-letter code: Triosephosphate isomerase (253 aa).

9 to 11 serves as a coordination point for substrate; sequence NWK. His97 acts as the Electrophile in catalysis. Glu169 functions as the Proton acceptor in the catalytic mechanism. Substrate is bound by residues Gly175, Ser215, and 236-237; that span reads GG.

This sequence belongs to the triosephosphate isomerase family. In terms of assembly, homodimer.

It is found in the cytoplasm. The enzyme catalyses D-glyceraldehyde 3-phosphate = dihydroxyacetone phosphate. The protein operates within carbohydrate biosynthesis; gluconeogenesis. Its pathway is carbohydrate degradation; glycolysis; D-glyceraldehyde 3-phosphate from glycerone phosphate: step 1/1. Involved in the gluconeogenesis. Catalyzes stereospecifically the conversion of dihydroxyacetone phosphate (DHAP) to D-glyceraldehyde-3-phosphate (G3P). This is Triosephosphate isomerase from Staphylococcus aureus (strain Mu50 / ATCC 700699).